Here is a 91-residue protein sequence, read N- to C-terminus: Molybdopterin synthase sulfur carrier subunit (91 aa).

The residue at position 91 (Gly-91) is a 1-thioglycine; alternate. A Glycyl adenylate; alternate modification is found at Gly-91.

The protein belongs to the MoaD family. MOCS2A subfamily. In terms of assembly, heterotetramer; composed of 2 small (MOCS2A) and 2 large (MOCS2B) subunits. Post-translationally, C-terminal thiocarboxylation occurs in 2 steps, it is first acyl-adenylated (-COAMP) via the hesA/moeB/thiF part of MOCS3, then thiocarboxylated (-COSH) via the rhodanese domain of MOCS3.

The protein resides in the cytoplasm. Its pathway is cofactor biosynthesis; molybdopterin biosynthesis. Acts as a sulfur carrier required for molybdopterin biosynthesis. Component of the molybdopterin synthase complex that catalyzes the conversion of precursor Z into molybdopterin by mediating the incorporation of 2 sulfur atoms into precursor Z to generate a dithiolene group. In the complex, serves as sulfur donor by being thiocarboxylated (-COSH) at its C-terminus by MOCS3. After interaction with MOCS2B, the sulfur is then transferred to precursor Z to form molybdopterin. The protein is Molybdopterin synthase sulfur carrier subunit of Anopheles gambiae (African malaria mosquito).